The following is a 384-amino-acid chain: Galactokinase (384 aa).

Substrate is bound at residue 34-37 (EHTD). 123 to 129 (SSGLSSS) lines the ATP pocket. Residues Ser129 and Glu161 each coordinate Mg(2+). Catalysis depends on Asp173, which acts as the Proton acceptor. Tyr222 contributes to the substrate binding site.

It belongs to the GHMP kinase family. GalK subfamily.

Its subcellular location is the cytoplasm. It carries out the reaction alpha-D-galactose + ATP = alpha-D-galactose 1-phosphate + ADP + H(+). Its pathway is carbohydrate metabolism; galactose metabolism. Catalyzes the transfer of the gamma-phosphate of ATP to D-galactose to form alpha-D-galactose-1-phosphate (Gal-1-P). This Actinobacillus pleuropneumoniae (Haemophilus pleuropneumoniae) protein is Galactokinase.